The sequence spans 460 residues: Probable elastin-binding protein EbpS (460 aa).

Residues 1-40 (MSNNNFKDDFEKNRQSINPDEHQTELKEDDKTNENKKEAD) are compositionally biased toward basic and acidic residues. Residues 1–277 (MSNNNFKDDF…NQYNDQSEGK (277 aa)) form a disordered region. Positions 41 to 57 (SQNSLSNNSNQQFPPRN) are enriched in low complexity. The segment covering 74-128 (QQDDKHQKNSDAKTTEGSLDDRYDEAQLQQQHDKSQQQNKTEKQSQDNRMKDGKD) has biased composition (basic and acidic residues). Low complexity predominate over residues 177–192 (ATGAGIAGAAGVAGAA). A compositionally biased stretch (basic and acidic residues) spans 203–226 (DKQDSKHSNHENDEKSVKNDDQKQ). The segment covering 264–273 (SNQNNQYNDQ) has biased composition (low complexity). The chain crosses the membrane as a helical span at residues 285–305 (ILLPLIAAILILGAIAIFGGM). Basic and acidic residues predominate over residues 313-359 (SKSDDQKIANQSKKDSDKKDGAQSEDNKDKKSDSNKDKKSDSDKNAD). The tract at residues 313–411 (SKSDDQKIAN…NQQATQGQQS (99 aa)) is disordered. Residues 364 to 411 (NSSSNPNATSTNNNDNVANNNSNYTNQNQQDNANQNSNNQQATQGQQS) are compositionally biased toward low complexity. The LysM domain maps to 410-458 (QSHTVYGQENLYRIAIQYYGEGTQANVDKIKRANGLSSNNIHNGQTLVI).

Its subcellular location is the cell membrane. The protein is Probable elastin-binding protein EbpS (ebpS) of Staphylococcus epidermidis (strain ATCC 35984 / DSM 28319 / BCRC 17069 / CCUG 31568 / BM 3577 / RP62A).